A 470-amino-acid polypeptide reads, in one-letter code: Pyoverdine export outer membrane protein OpmQ (470 aa).

The signal sequence occupies residues 1–18 (MTLPRHLCLLPLSLSLLA). C19 carries N-palmitoyl cysteine lipidation. Residue C19 is the site of S-diacylglycerol cysteine attachment.

It belongs to the outer membrane factor (OMF) (TC 1.B.17) family. As to quaternary structure, part of the tripartite efflux system PvdRT-OpmQ, which is composed of an inner membrane component with both ATPase and permease domains, PvdT, a periplasmic membrane fusion protein, PvdR, and an outer membrane component, OpmQ.

Its subcellular location is the cell outer membrane. Its function is as follows. Part of the tripartite efflux system PvdRT-OpmQ required for the secretion into the extracellular milieu of the siderophore pyoverdine (PVD), which is involved in iron acquisition. The system is responsible for export of newly synthesized PVD after the final steps of biosynthesis have taken place in the periplasm. It is also responsible for recycling of PVD after internalization of ferri-PVD into the periplasm by the outer-membrane receptor FpvA and release of iron from PVD, thus making PVD available for new cycles of iron uptake. Contributes to resistance against ampicillin. This is Pyoverdine export outer membrane protein OpmQ from Pseudomonas putida (strain ATCC 47054 / DSM 6125 / CFBP 8728 / NCIMB 11950 / KT2440).